A 289-amino-acid polypeptide reads, in one-letter code: Trihelix transcription factor GT-3b (289 aa).

Residues 42 to 98 (WSVEETKELIGIRGELDQTFMETKRNKLLWEVISNKMRDKSFPRSPEQCKCKWKNLV) form the Myb-like domain. The short motif at 65 to 81 (KRNKLLWEVISNKMRDK) is the Bipartite nuclear localization signal element. The interval 137–200 (ESEGGGGGTS…SNSSNSNNGV (64 aa)) is disordered. Residues 156–168 (SDEEEENVNEELV) are compositionally biased toward acidic residues. Residues 179–188 (PKKNIAKKRK) carry the Nuclear localization signal motif. Positions 190 to 199 (GSNSSNSNNG) are enriched in low complexity. The stretch at 223–275 (EAREKERAEKEEEWRRKMEELEKERLAMERMWRDREEQRRSREEMRAEKRDSL) forms a coiled coil.

In terms of assembly, heterodimer with GT-3A. Associated with the mediator complex.

It is found in the nucleus. Functionally, probable transcription factor that may play a role in the induction of CAM4 in response to pathogen and salt. In Arabidopsis thaliana (Mouse-ear cress), this protein is Trihelix transcription factor GT-3b (GT-3B).